The primary structure comprises 494 residues: UDP-N-acetylmuramoyl-L-alanyl-D-glutamate--2,6-diaminopimelate ligase (494 aa).

Serine 32 serves as a coordination point for UDP-N-acetyl-alpha-D-muramoyl-L-alanyl-D-glutamate. 112–118 (GTNGKTT) serves as a coordination point for ATP. Residues asparagine 153, 154–155 (TT), serine 181, and arginine 189 contribute to the UDP-N-acetyl-alpha-D-muramoyl-L-alanyl-D-glutamate site. Lysine 221 is modified (N6-carboxylysine). Residues arginine 383, 407 to 410 (DNPR), glycine 459, and glutamate 463 contribute to the meso-2,6-diaminopimelate site. The Meso-diaminopimelate recognition motif signature appears at 407–410 (DNPR).

This sequence belongs to the MurCDEF family. MurE subfamily. The cofactor is Mg(2+). Carboxylation is probably crucial for Mg(2+) binding and, consequently, for the gamma-phosphate positioning of ATP.

The protein resides in the cytoplasm. The enzyme catalyses UDP-N-acetyl-alpha-D-muramoyl-L-alanyl-D-glutamate + meso-2,6-diaminopimelate + ATP = UDP-N-acetyl-alpha-D-muramoyl-L-alanyl-gamma-D-glutamyl-meso-2,6-diaminopimelate + ADP + phosphate + H(+). The protein operates within cell wall biogenesis; peptidoglycan biosynthesis. In terms of biological role, catalyzes the addition of meso-diaminopimelic acid to the nucleotide precursor UDP-N-acetylmuramoyl-L-alanyl-D-glutamate (UMAG) in the biosynthesis of bacterial cell-wall peptidoglycan. This Solibacter usitatus (strain Ellin6076) protein is UDP-N-acetylmuramoyl-L-alanyl-D-glutamate--2,6-diaminopimelate ligase.